Consider the following 620-residue polypeptide: Methionine--tRNA ligase (620 aa).

The 'HIGH' region signature appears at 11–21 (PYANGPRHIGH). Residues cysteine 143, cysteine 146, cysteine 156, and cysteine 159 each coordinate Zn(2+). A 'KMSKS' region motif is present at residues 347 to 351 (KFSSS). Residue serine 350 participates in ATP binding.

This sequence belongs to the class-I aminoacyl-tRNA synthetase family. MetG type 1 subfamily. In terms of assembly, monomer. The cofactor is Zn(2+).

Its subcellular location is the cytoplasm. It catalyses the reaction tRNA(Met) + L-methionine + ATP = L-methionyl-tRNA(Met) + AMP + diphosphate. Its function is as follows. Is required not only for elongation of protein synthesis but also for the initiation of all mRNA translation through initiator tRNA(fMet) aminoacylation. The protein is Methionine--tRNA ligase of Bifidobacterium adolescentis (strain ATCC 15703 / DSM 20083 / NCTC 11814 / E194a).